The chain runs to 758 residues: Microtubule-associated protein tau (758 aa).

The segment covering 1–26 has biased composition (basic and acidic residues); that stretch reads MAEPHQEFDVTEDHAGTYGLGDRKDQ. The interval 1–573 is disordered; sequence MAEPHQEFDV…PVPMPDLKNV (573 aa). Alanine 2 is modified (N-acetylalanine). Tyrosine 18 and tyrosine 29 each carry phosphotyrosine. Lysine 44 participates in a covalent cross-link: Glycyl lysine isopeptide (Lys-Gly) (interchain with G-Cter in ubiquitin). Serine 46 and serine 61 each carry phosphoserine. Residues 61–71 are compositionally biased toward polar residues; that stretch reads SETSDAKSTPT. Residues threonine 69, threonine 71, and threonine 111 each carry the phosphothreonine modification. Composition is skewed to basic and acidic residues over residues 179 to 189 and 207 to 216; these read EGGRHAPELLK and GGKERPGSKE. Serine 214 is modified (phosphoserine). Over residues 217–228 the composition is skewed to acidic residues; that stretch reads EVDEDRDVDESS. The span at 314–323 shows a compositional bias: basic and acidic residues; that stretch reads EQAHSEEHLR. Residues 325-340 show a composition bias toward low complexity; that stretch reads AAFPGAPGEGPEAQGP. Basic and acidic residues-rich tracts occupy residues 344 to 356 and 381 to 393; these read EDAK…EPSE and KSKD…DKKA. A compositionally biased stretch (polar residues) spans 440-452; sequence KYVSSVTPRTGSS. Residues 455 to 466 show a composition bias toward basic and acidic residues; sequence KEMKLKGADGKT. Threonine 470 carries the post-translational modification Phosphothreonine. Arginine 472 carries the post-translational modification Omega-N-methylarginine. At lysine 480 the chain carries N6,N6-dimethyllysine; alternate. Lysine 480 carries the N6-acetyllysine; alternate modification. Phosphothreonine is present on residues threonine 486, threonine 492, and threonine 498. The span at 491–503 shows a compositional bias: pro residues; sequence KTPPAPKTPPSSG. Phosphoserine is present on residues serine 502, serine 508, and serine 512. A compositionally biased stretch (low complexity) spans 504–531; that stretch reads EPPKSGDRSGYSSPGSPGTPGSRSRTPS. Tyrosine 514 bears the Phosphotyrosine mark. Residues serine 515, serine 516, and serine 519 each carry the phosphoserine modification. Phosphothreonine is present on residues threonine 522 and threonine 529. Phosphoserine is present on serine 531. The residue at position 534 (threonine 534) is a Phosphothreonine. Lysine 542 is modified (N6-acetyllysine). Threonine 548 is subject to Phosphothreonine. 2 positions are modified to phosphoserine: serine 552 and serine 554. Tau/MAP repeat units follow at residues 561-591, 592-622, 623-653, and 654-685; these read QTAP…GGGK, VQII…GGGS, VQIV…GGGQ, and VEVK…GGGH. Residue lysine 571 forms a Glycyl lysine isopeptide (Lys-Gly) (interchain with G-Cter in ubiquitin) linkage. Position 576 is an N6-acetyllysine; alternate (lysine 576). Lysine 576 is subject to N6-methyllysine; alternate. Lysine 576 is covalently cross-linked (Glycyl lysine isopeptide (Lys-Gly) (interchain with G-Cter in ubiquitin); alternate). Position 579 is a phosphoserine (serine 579). Lysine 584 participates in a covalent cross-link: Glycyl lysine isopeptide (Lys-Gly) (interchain with G-Cter in ubiquitin). Lysine 598 is modified (N6-acetyllysine; alternate). Lysine 598 participates in a covalent cross-link: Glycyl lysine isopeptide (Lys-Gly) (interchain with G-Cter in ubiquitin); alternate. Phosphoserine is present on residues serine 602 and serine 606. Lysine 607 is subject to N6-acetyllysine. At serine 610 the chain carries Phosphoserine. N6-acetyllysine; alternate is present on lysine 615. Lysine 615 participates in a covalent cross-link: Glycyl lysine isopeptide (Lys-Gly) (interchain with G-Cter in ubiquitin); alternate. Serine 622 is subject to Phosphoserine. Lysine 628 is modified (N6,N6-dimethyllysine; alternate). Lysine 628, lysine 634, and lysine 638 each carry N6-acetyllysine; alternate. Residues lysine 628, lysine 634, and lysine 638 each participate in a glycyl lysine isopeptide (Lys-Gly) (interchain with G-Cter in ubiquitin); alternate cross-link. The residue at position 641 (serine 641) is a Phosphoserine. N6-acetyllysine; alternate is present on residues lysine 648, lysine 660, and lysine 664. Glycyl lysine isopeptide (Lys-Gly) (interchain with G-Cter in ubiquitin); alternate cross-links involve residues lysine 648, lysine 660, and lysine 664. Residue arginine 666 is modified to Omega-N-methylarginine. Serine 669 carries the phosphoserine modification. A Glycyl lysine isopeptide (Lys-Gly) (interchain with G-Cter in ubiquitin) cross-link involves residue lysine 670. A Phosphoserine modification is found at serine 673. An N6-acetyllysine; alternate modification is found at lysine 686. Residue lysine 686 forms a Glycyl lysine isopeptide (Lys-Gly) (interchain with G-Cter in ubiquitin); alternate linkage. Residue lysine 692 forms a Glycyl lysine isopeptide (Lys-Gly) (interchain with G-Cter in ubiquitin) linkage. Position 702 is an N6-acetyllysine; alternate (lysine 702). A Glycyl lysine isopeptide (Lys-Gly) (interchain with G-Cter in ubiquitin); alternate cross-link involves residue lysine 702. At tyrosine 711 the chain carries Phosphotyrosine. 2 positions are modified to phosphoserine: serine 713 and serine 717. The interval 715-734 is disordered; that stretch reads VVSGDTSPRHLSNVSSTGSI. Positions 718–733 are enriched in polar residues; it reads GDTSPRHLSNVSSTGS. Residue threonine 720 is modified to Phosphothreonine. Phosphoserine is present on residues serine 721, serine 726, serine 733, and serine 739. At threonine 744 the chain carries Phosphothreonine.

In terms of assembly, interacts with MARK1, MARK2, MARK3 and MARK4. Interacts with SQSTM1 when polyubiquitinated. Interacts with PSMC2 through SQSTM1. Interacts with FKBP4. Binds to CSNK1D. Interacts with SGK1. Interacts with EPM2A; the interaction dephosphorylates MAPT at Ser-396. Interacts with PIN1. Interacts with LRRK2. Interacts with LRP1, leading to endocytosis; this interaction is reduced in the presence of LRPAP1/RAP. Post-translationally, polyubiquitinated. Requires functional TRAF6 and may provoke SQSTM1-dependent degradation by the proteasome. Phosphorylation at various serine and threonine residues in S-P or T-P motifs by proline-directed protein kinases (PDPK1, CDK1, CDK5, GSK3, MAPK) (a few sites per protein in interphase, more in mitosis), and at serine residues in K-X-G-S motifs by MAP/microtubule affinity-regulating kinase (MARK1, MARK2, MARK3 or MARK4), causing detachment from microtubules, and their disassembly. Phosphorylation at Ser-579 by BRSK1 and BRSK2 in neurons affects ability to bind microtubules and plays a role in neuron polarization. Phosphorylated by PHK. Dephosphorylation at several serine and threonine residues by the serine/threonine phosphatase PPP5C. Phosphorylation at Ser-214 by SGK1 mediates microtubule depolymerization and neurite formation in hippocampal neurons.

Its subcellular location is the cytoplasm. It is found in the cytosol. It localises to the cell membrane. The protein resides in the cytoskeleton. The protein localises to the cell projection. Its subcellular location is the axon. It is found in the dendrite. Its function is as follows. Promotes microtubule assembly and stability, and might be involved in the establishment and maintenance of neuronal polarity. The C-terminus binds axonal microtubules while the N-terminus binds neural plasma membrane components, suggesting that tau functions as a linker protein between both. Axonal polarity is predetermined by tau localization (in the neuronal cell) in the domain of the cell body defined by the centrosome. The short isoforms allow plasticity of the cytoskeleton whereas the longer isoforms may preferentially play a role in its stabilization. The protein is Microtubule-associated protein tau (MAPT) of Pongo pygmaeus (Bornean orangutan).